A 523-amino-acid polypeptide reads, in one-letter code: Synaptotagmin-10 (523 aa).

Residues 1-55 lie on the Vesicular side of the membrane; it reads MSFHKEDGVNSLCQKALHIVTELCFAGQVEWEKCSGIFPRDRGSQGGSSTDISVS. Residues 13-35 form a cysteine motif region; it reads CQKALHIVTELCFAGQVEWEKCS. Residues 56–76 form a helical membrane-spanning segment; the sequence is LLAVVVSFCGLALLVVSLFVF. The Cytoplasmic portion of the chain corresponds to 77-523; sequence WKLCWPCWKS…CPSPKPPSTP (447 aa). A Phosphothreonine modification is found at Thr136. C2 domains are found at residues 231–352 and 363–496; these read ICGK…TVWK and DLGE…THWH. The Ca(2+) site is built by Asp262, Asp268, Asp320, Phe321, Asp322, Ser325, Asp328, Asp394, Asp400, Asp454, and Asp456.

Belongs to the synaptotagmin family. As to quaternary structure, homodimer; disulfide-linked via the cysteine motif. Can also form heterodimers with SYT3, SYT6, SYT7 and SYT9. Ca(2+) is required as a cofactor.

It localises to the cytoplasmic vesicle. Its subcellular location is the secretory vesicle membrane. Functionally, ca(2+) sensor specifically required for the Ca(2+)-dependent exocytosis of secretory vesicles containing IGF1 in neurons of the olfactory bulb. Exocytosis of IGF1 is required for sensory perception of smell. Not involved in Ca(2+)-dependent synaptic vesicle exocytosis. Acts through Ca(2+) and phospholipid binding to the C2 domain: Ca(2+) induces binding of the C2-domains to phospholipid membranes and to assembled SNARE-complexes; both actions contribute to triggering exocytosis. The sequence is that of Synaptotagmin-10 (SYT10) from Pongo abelii (Sumatran orangutan).